A 676-amino-acid chain; its full sequence is Pre-mRNA-splicing factor clf1 (676 aa).

14 HAT repeats span residues 52-84, 86-118, 120-152, 154-185, 187-218, 220-255, 257-291, 301-333, 335-369, 379-415, 417-448, 450-482, 484-518, and 520-551; these read EYQGRKRKEFEDYVRRNRLNMNNWMRYASWELE, KEFRRARSIFERALDVNPTSVVLWIRYIESEMR, RNINHARNLLDRAVTILPRVDKFWYKYVYMEET, GNIQGTRQVFERWMSWEPDEGAWSAYIKLEKR, NEFERARAIFQRFTIVHPEPRNWIKWARFEEE, GTSDLVREVYGMAIETLGEDFMDEKLFIAYAKFEAK, KEYERARAIYKYALDRLPRSKAMALHKAYTTFEKQ, VILSKRRVQYEEQLKENPRNYDVWFDFARLEET, GDPDRVRDIYERAIAQIPPSQEKRHWRRYIYLWIF, KDVDRARQIYTECLKLIPHKKFTFAKIWLLKAQFDIR, MDLQAARKTLGQAIGMCPKDKLFRGYIDLERQ, FEFVRCRTLYEKQIEWNPANSQSWIKYAELERG, DDSERARAIFELGIDQPMLDMPELVWKAYIDFEEY, and GEYDRVRQLYERLLQKTDHVKVWINYARFEIN. A compositionally biased stretch (acidic residues) spans 554 to 566; the sequence is EEEEEEEEEEEEE. The disordered stretch occupies residues 554–573; it reads EEEEEEEEEEEEERPVSDEA. The HAT 15 repeat unit spans residues 572–610; it reads EAKRRARAVFERAHKVFKEKEMKEERVELLNAWRAFEHT.

The protein belongs to the crooked-neck family. As to quaternary structure, associated with the spliceosome.

It is found in the nucleus. Involved in pre-mRNA splicing and cell cycle progression. Required for the spliceosome assembly and initiation of the DNA replication. This chain is Pre-mRNA-splicing factor clf1 (clf1), found in Aspergillus fumigatus (strain ATCC MYA-4609 / CBS 101355 / FGSC A1100 / Af293) (Neosartorya fumigata).